A 353-amino-acid polypeptide reads, in one-letter code: MLCTLFLLLLALGIVQTTRPCFPGCQCEEETFGLFDSFSLIRVDCSSLGPHIVPVPIPLDTAHLDLSSNRLETVNESVLGGPGYTTLAGLDLSHNLLTSITPTAFSRLRYLESLDLSHNGLAALPAEVFTSSPLSDINLSHNRLREVSISAFTTHSQGRALHVDLSHNLIHRLLPYPARASLSAPTIQSLNLSWNRLRAVPDLRDLPLRYLSLDGNPLATINPGAFMGLAGLTHLSLASLQGILQLPPHGFRELPGLQVLDLSGNPKLKWAGAEVFSGLGLLQELDLSGSSLVPLPETLLHHLPALQSVSVGQDVQCRRLVREGAYHRQPGSSPKVVLHCGDTQESARGPDIL.

Positions 1 to 17 (MLCTLFLLLLALGIVQT) are cleaved as a signal peptide. The 42-residue stretch at 18–59 (TRPCFPGCQCEEETFGLFDSFSLIRVDCSSLGPHIVPVPIPL) folds into the LRRNT domain. LRR repeat units lie at residues 60–80 (DTAHLDLSSNRLETVNESVLG), 86–107 (TLAGLDLSHNLLTSITPTAFSR), 110–131 (YLESLDLSHNGLAALPAEVFTS), 133–154 (PLSDINLSHNRLREVSISAFTT), 160–180 (ALHVDLSHNLIHRLLPYPARA), 186–207 (TIQSLNLSWNRLRAVPDLRDLP), 208–228 (LRYLSLDGNPLATINPGAFMG), 231–253 (GLTHLSLASLQGILQLPPHGFRE), 256–277 (GLQVLDLSGNPKLKWAGAEVFS), and 281–302 (LLQELDLSGSSLVPLPETLLHH). Asn-75 carries N-linked (GlcNAc...) asparagine glycosylation. Asn-138 carries N-linked (GlcNAc...) asparagine glycosylation. Residue Asn-191 is glycosylated (N-linked (GlcNAc...) asparagine).

In terms of assembly, interacts with FZD4 (via FZ domain); competes with WNT2B for binding to FZD4, inhibiting Wnt signaling and repressing peripheral eye development. Interacts with TGFB1; the interaction contributes to regulation of the hair cycle. Interacts with netrin. Interacts with CCN2. In terms of tissue distribution, expressed at high levels in the liver, small intestine and placenta. Not or barely detectable in other tissues, including whole pancreas, adipose tissues, skeletal muscle, kidney, spleen, brain, lung and testis.

Its subcellular location is the secreted. Functionally, contributes to various developmental events and other processes such as wound healing and cholesterol homeostasis through its interactions with multiple signaling pathways. Wnt signaling inhibitor which competes with WNT2B for binding to Wnt receptor FZD4 and represses WNT2B-dependent development of the peripheral eye. Plays a role in regulating the hair cycle by controlling TGFB1 signaling. Required for the development of the anterior commissure in the brain by inhibiting neurite outgrowth. Essential for terminal differentiation of hippocampal neural stem cells. Plays a role in regulating bone elongation and bone mass by modulating growth plate chondrocyte function and overall body size. Required for development of the inner ear through its involvement in stereocilia formation in inner hair cells. Facilitates wound healing by inhibiting secretion of TGFB1 from macrophages which prevents myofibroblast differentiation, maintaining inflammatory cell quiescence. Plays a role in cholesterol homeostasis by reducing circulating high-density lipoprotein cholesterol, lowering cholesterol efflux capacity and decreasing cholesterol-to-bile acid conversion in the liver. In one study, shown to negatively regulate sympathetic innervation in brown fat, leading to reduced energy expenditure. In another study, shown not to affect brown fat thermogenic capacity, body weight gain or glucose homeostasis. The protein is Tsukushi (Tsku) of Rattus norvegicus (Rat).